We begin with the raw amino-acid sequence, 891 residues long: Protein translocase subunit SecA 1 (891 aa).

Residues Gln85, Gly103–Thr107, and Asp491 each bind ATP. Positions 877, 879, 888, and 889 each coordinate Zn(2+).

It belongs to the SecA family. In terms of assembly, monomer and homodimer. Part of the essential Sec protein translocation apparatus which comprises SecA, SecYEG and auxiliary proteins SecDF. Other proteins may also be involved. Zn(2+) serves as cofactor.

The protein resides in the cell membrane. It is found in the cytoplasm. The enzyme catalyses ATP + H2O + cellular proteinSide 1 = ADP + phosphate + cellular proteinSide 2.. In terms of biological role, part of the Sec protein translocase complex. Interacts with the SecYEG preprotein conducting channel. Has a central role in coupling the hydrolysis of ATP to the transfer of proteins into and across the cell membrane, serving as an ATP-driven molecular motor driving the stepwise translocation of polypeptide chains across the membrane. In Clostridioides difficile (strain 630) (Peptoclostridium difficile), this protein is Protein translocase subunit SecA 1.